A 387-amino-acid chain; its full sequence is Phosphoglycerate kinase (387 aa).

Residues 21–23 (DLN), Arg36, 59–62 (HLGR), Arg113, and Arg146 each bind substrate. ATP is bound by residues Lys197, Glu314, and 340-343 (GGDT).

This sequence belongs to the phosphoglycerate kinase family. Monomer.

The protein resides in the cytoplasm. It catalyses the reaction (2R)-3-phosphoglycerate + ATP = (2R)-3-phospho-glyceroyl phosphate + ADP. Its pathway is carbohydrate degradation; glycolysis; pyruvate from D-glyceraldehyde 3-phosphate: step 2/5. This is Phosphoglycerate kinase from Aeromonas hydrophila subsp. hydrophila (strain ATCC 7966 / DSM 30187 / BCRC 13018 / CCUG 14551 / JCM 1027 / KCTC 2358 / NCIMB 9240 / NCTC 8049).